Reading from the N-terminus, the 449-residue chain is Xylose isomerase (449 aa).

Residues His103 and Asp106 contribute to the active site. The Mg(2+) site is built by Glu234, Glu270, His273, Asp298, Asp309, Asp311, and Asp342.

It belongs to the xylose isomerase family. As to quaternary structure, homotetramer. It depends on Mg(2+) as a cofactor.

It is found in the cytoplasm. It carries out the reaction alpha-D-xylose = alpha-D-xylulofuranose. The protein is Xylose isomerase of Levilactobacillus brevis (strain ATCC 367 / BCRC 12310 / CIP 105137 / JCM 1170 / LMG 11437 / NCIMB 947 / NCTC 947) (Lactobacillus brevis).